Here is a 227-residue protein sequence, read N- to C-terminus: GRF-interacting factor 1 (227 aa).

Positions 186-227 (RSGSGAKEGSTSLSVDVRGGTSSGAQSGDGEYLKVGTEEEGS) are disordered.

This sequence belongs to the SS18 family. In terms of assembly, interacts with several GRFs. Interacts with GRF10. Interacts with GRF1. As to expression, expressed in shoots, aerial roots, ears and tassels. Expressed in the shoot apical meristem (SAM), young leaf primordia, leaf margins, inflorescence meristem, floral meristem and spikelet meristem.

Functionally, transcription coactivator that plays a role in the regulation of meristematic function in leaves, stems and inflorescences. Regulates shoot architecture and meristem determinacy. Binds to the inflorescence architecture gene UB3 (unbranched3). Regulates the expression of several genes involved in inflorescence architecture. Component of a network formed by the microRNA396 (miRNA396), the GRFs and their interacting factors (GIFs) acting in the regulation of meristem function, at least partially through the control of cell proliferation. Associates with the core SWI/SNF chromatin-remodeling complex and specific GRFs to tightly regulate the transition between cell division and cell expansion in growing leaves. The protein is GRF-interacting factor 1 of Zea mays (Maize).